We begin with the raw amino-acid sequence, 188 residues long: MFHQIWAALLYFYGIILNSIYQCPEHSQLTTLGVDGKEFPEVHLGQWYFIAGAAPTKEELATFDPVDNIIFNMAAGSAPTQLHLRATIRMKDGLCVPRKWIYHLTEGSTDLRTEGRPDMKTELFSSSCPGGIMLNETGQGYQRFLFYNRSPHPPEKCVEEFKSLTSCLDSKAFLLTPRNQEACELSSN.

Positions 1 to 22 form a signal peptide, not cleaved; it reads MFHQIWAALLYFYGIILNSIYQ. 3 cysteine pairs are disulfide-bonded: Cys-23/Cys-167, Cys-95/Cys-183, and Cys-128/Cys-157. The N-linked (GlcNAc...) asparagine glycan is linked to Asn-135. Residues Glu-136 and Arg-143 each coordinate tetradecanoate.

The protein belongs to the calycin superfamily. Lipocalin family. Highly divergent. In terms of assembly, interacts with LRP2; LRP2 mediates APOM renal uptake and subsequent lysosomal degradation.

The protein resides in the secreted. Functionally, probably involved in lipid transport. Can bind sphingosine-1-phosphate, myristic acid, palmitic acid and stearic acid, retinol, all-trans-retinoic acid and 9-cis-retinoic acid. The sequence is that of Apolipoprotein M (APOM) from Pongo abelii (Sumatran orangutan).